The sequence spans 430 residues: Probable beta-1,3-galactosyl-O-glycosyl-glycoprotein beta-1,6-N-acetylglucosaminyltransferase 7 (430 aa).

At 1–8 (MSQLRATK) the chain is on the cytoplasmic side. A helical; Signal-anchor for type II membrane protein transmembrane segment spans residues 9–25 (SGLVVRAVICIFIFLYL). The Extracellular segment spans residues 26 to 430 (RNPTPAESEE…QSHFNMRLNR (405 aa)). 4 disulfide bridges follow: Cys-53-Cys-205, Cys-139-Cys-354, Cys-160-Cys-187, and Cys-363-Cys-395. An N-linked (GlcNAc...) asparagine glycan is attached at Asn-87. N-linked (GlcNAc...) asparagine glycosylation occurs at Asn-272.

It belongs to the glycosyltransferase 14 family.

The protein localises to the golgi apparatus membrane. The protein operates within protein modification; protein glycosylation. Its function is as follows. Probable glycosyltransferase. In Homo sapiens (Human), this protein is Probable beta-1,3-galactosyl-O-glycosyl-glycoprotein beta-1,6-N-acetylglucosaminyltransferase 7.